Here is a 185-residue protein sequence, read N- to C-terminus: Large ribosomal subunit protein uL15 (185 aa).

A disordered region spans residues 1 to 51 (MDLSSLRPAAGAVKNKKRVGRGQGSGNGTTAGKGNKGQQARSGYQKPINEG). The span at 21 to 35 (RGQGSGNGTTAGKGN) shows a compositional bias: gly residues.

The protein belongs to the universal ribosomal protein uL15 family. As to quaternary structure, part of the 50S ribosomal subunit.

Its function is as follows. Binds to the 23S rRNA. The sequence is that of Large ribosomal subunit protein uL15 from Chlorobium phaeobacteroides (strain DSM 266 / SMG 266 / 2430).